Here is a 462-residue protein sequence, read N- to C-terminus: tRNA modification GTPase MnmE (462 aa).

Residues Arg27, Glu89, and Arg128 each contribute to the (6S)-5-formyl-5,6,7,8-tetrahydrofolate site. Residues 223 to 383 (GLKIAIVGRP…LEAAILAAVG (161 aa)) form the TrmE-type G domain. K(+) is bound at residue Asn233. GTP-binding positions include 233 to 238 (NVGKSS), 252 to 258 (TDLPGTT), and 277 to 280 (DTAG). Ser237 contacts Mg(2+). Residues Thr252, Leu254, and Thr257 each contribute to the K(+) site. Thr258 contacts Mg(2+). (6S)-5-formyl-5,6,7,8-tetrahydrofolate is bound at residue Lys462.

It belongs to the TRAFAC class TrmE-Era-EngA-EngB-Septin-like GTPase superfamily. TrmE GTPase family. Homodimer. Heterotetramer of two MnmE and two MnmG subunits. K(+) serves as cofactor.

It is found in the cytoplasm. Exhibits a very high intrinsic GTPase hydrolysis rate. Involved in the addition of a carboxymethylaminomethyl (cmnm) group at the wobble position (U34) of certain tRNAs, forming tRNA-cmnm(5)s(2)U34. In Synechococcus elongatus (strain ATCC 33912 / PCC 7942 / FACHB-805) (Anacystis nidulans R2), this protein is tRNA modification GTPase MnmE.